A 1165-amino-acid chain; its full sequence is Error-prone DNA polymerase (1165 aa).

Residues 1111–1165 form a disordered region; it reads SEGLARPPLPTGADLYEPLTYEPLNGDRRDNPDAPAQRLRHPRDVRILPPSRDFH. Residues 1152 to 1165 are compositionally biased toward basic and acidic residues; the sequence is PRDVRILPPSRDFH.

This sequence belongs to the DNA polymerase type-C family. DnaE2 subfamily.

The protein localises to the cytoplasm. It carries out the reaction DNA(n) + a 2'-deoxyribonucleoside 5'-triphosphate = DNA(n+1) + diphosphate. Functionally, DNA polymerase involved in damage-induced mutagenesis and translesion synthesis (TLS). It is not the major replicative DNA polymerase. The protein is Error-prone DNA polymerase of Rhodopseudomonas palustris (strain HaA2).